A 552-amino-acid chain; its full sequence is Putative transport protein YPN_3727 (552 aa).

The next 6 helical transmembrane spans lie at 1-21, 26-46, 65-85, 96-116, 119-139, and 158-178; these read MSAIALTVSMLALVAVLGLWI, IYGVGLGIGGVLFGGIIVGHF, FGLILFVYTIGIQVGPGFFSS, FAILMVVVGGLVTAIIHKLFA, LPIILGVFSGAVTNTPALGAA, and MGYAMAYPFGICGILLVMWLI. 2 RCK C-terminal domains span residues 192-276 and 279-361; these read AFDS…VVGE and DVTL…IVGN. 6 helical membrane passes run 371-391, 393-413, 439-459, 464-484, 493-513, and 530-550; these read MLPVFIGVGLGVLLGSIPLFV, GFPAALRLGLAGGPLVVALIL, IVLFLSVVGLKSGGDFINTLV, LAWIGYGAMITGIPLLTVGIL, YLTLCGMLAGSMTDPPALAFA, and VYPLAMFLRIMSPQILAVLFW.

It belongs to the AAE transporter (TC 2.A.81) family. YidE subfamily.

Its subcellular location is the cell membrane. The protein is Putative transport protein YPN_3727 of Yersinia pestis bv. Antiqua (strain Nepal516).